The primary structure comprises 358 residues: uncharacterized protein (358 aa).

Over residues 70 to 88 the composition is skewed to low complexity; the sequence is RPAATAGTTPATGASGSAR. A disordered region spans residues 70–93; the sequence is RPAATAGTTPATGASGSARPTDAA. The 176-residue stretch at 178 to 353 folds into the Macro domain; sequence PSTCRGDNVS…AFSAAIQAGE (176 aa).

This is an uncharacterized protein from Mycobacterium bovis (strain ATCC BAA-935 / AF2122/97).